The chain runs to 174 residues: MIQLMLYSLIITTSIIFLNMIHPLALGLTLLIQTIFVCLLTGLMTKSFWYSYILFLIFLGGMLVLFIYVTSLASNEMFNLSMKLTLFSSLILIFMLILSFIMDKTSSSLFLMNNDMQSIINMNSYFMENSLSLNKLYNFPTNFITILLMNYLLITLIVIVKITKLFKGPIRMMS.

Helical transmembrane passes span 24–44, 53–73, 82–102, and 143–163; these read LALG…TGLM, ILFL…TSLA, MKLT…SFIM, and FITI…VKIT.

The protein belongs to the complex I subunit 6 family.

The protein resides in the mitochondrion membrane. The catalysed reaction is a ubiquinone + NADH + 5 H(+)(in) = a ubiquinol + NAD(+) + 4 H(+)(out). Its function is as follows. Core subunit of the mitochondrial membrane respiratory chain NADH dehydrogenase (Complex I) that is believed to belong to the minimal assembly required for catalysis. Complex I functions in the transfer of electrons from NADH to the respiratory chain. The immediate electron acceptor for the enzyme is believed to be ubiquinone. The sequence is that of NADH-ubiquinone oxidoreductase chain 6 (mt:ND6) from Drosophila melanogaster (Fruit fly).